We begin with the raw amino-acid sequence, 89 residues long: Small ribosomal subunit protein uS15 (89 aa).

The protein belongs to the universal ribosomal protein uS15 family. As to quaternary structure, part of the 30S ribosomal subunit. Forms a bridge to the 50S subunit in the 70S ribosome, contacting the 23S rRNA.

Its function is as follows. One of the primary rRNA binding proteins, it binds directly to 16S rRNA where it helps nucleate assembly of the platform of the 30S subunit by binding and bridging several RNA helices of the 16S rRNA. In terms of biological role, forms an intersubunit bridge (bridge B4) with the 23S rRNA of the 50S subunit in the ribosome. The polypeptide is Small ribosomal subunit protein uS15 (Acholeplasma laidlawii (strain PG-8A)).